Consider the following 445-residue polypeptide: Probable D-serine dehydratase (445 aa).

Residue K111 is modified to N6-(pyridoxal phosphate)lysine.

Belongs to the serine/threonine dehydratase family. DsdA subfamily. Pyridoxal 5'-phosphate is required as a cofactor.

The enzyme catalyses D-serine = pyruvate + NH4(+). The protein is Probable D-serine dehydratase of Burkholderia pseudomallei (strain 668).